Consider the following 337-residue polypeptide: CMP-sialic acid transporter (337 aa).

Residues 1 to 9 lie on the Cytoplasmic side of the membrane; sequence MAAPRDNVT. Residues 10–30 traverse the membrane as a helical segment; sequence LLFKLYCLAVMTLMAAVYTIA. The Lumenal portion of the chain corresponds to 31 to 45; it reads LRYTRTSDKELYFST. The chain crosses the membrane as a helical span at residues 46-64; the sequence is TAVCITEVIKLLLSVGILA. Position 55 (lysine 55) interacts with CMP-N-acetyl-beta-neuraminate. The Cytoplasmic segment spans residues 65-87; the sequence is KETGSLGRFKASLRENVLGSPKE. The chain crosses the membrane as a helical span at residues 88–108; the sequence is LLKLSVPSLVYAVQNNMAFLA. 101–102 is a CMP-N-acetyl-beta-neuraminate binding site; it reads QN. Residues 109 to 114 are Lumenal-facing; the sequence is LSNLDA. Residues 115–135 traverse the membrane as a helical segment; the sequence is AVYQVTYQLKIPCTALCTVLM. 117–124 contributes to the CMP-N-acetyl-beta-neuraminate binding site; sequence YQVTYQLK. Residues 136 to 141 lie on the Cytoplasmic side of the membrane; it reads LNRTLS. The helical transmembrane segment at 142–160 threads the bilayer; the sequence is KLQWVSVFMLCAGVTLVQW. Topologically, residues 161-175 are lumenal; the sequence is KPAQATKVVVEQNPL. Residues 176 to 196 form a helical membrane-spanning segment; it reads LGFGAIAIAVLCSGFAGVYFE. Residue serine 188 participates in CMP-N-acetyl-beta-neuraminate binding. The Cytoplasmic segment spans residues 197 to 209; that stretch reads KVLKSSDTSLWVR. CMP-N-acetyl-beta-neuraminate is bound at residue 210 to 214; it reads NIQMY. A helical membrane pass occupies residues 210–228; sequence NIQMYLSGIIVTLAGVYLS. The Lumenal segment spans residues 229–243; that stretch reads DGAEIKEKGFFYGYT. The chain crosses the membrane as a helical span at residues 244-262; it reads YYVWFVIFLASVGGLYTSV. Residues 263 to 269 lie on the Cytoplasmic side of the membrane; the sequence is VVKYTDN. Residues 270–288 traverse the membrane as a helical segment; it reads IMKGFSAAAAIVLSTIASV. Lysine 272 lines the CMP-N-acetyl-beta-neuraminate pocket. Residues 289 to 296 are Lumenal-facing; it reads MLFGLQIT. A helical membrane pass occupies residues 297–315; it reads LTFALGTLLVCVSIYLYGL. At 316–337 the chain is on the cytoplasmic side; the sequence is PRQDTTSIQQGETASKERVIGV. Positions 316 to 337 are disordered; sequence PRQDTTSIQQGETASKERVIGV.

Belongs to the nucleotide-sugar transporter family. SLC35A subfamily. Monomer.

The protein localises to the golgi apparatus membrane. The protein resides in the golgi apparatus. The catalysed reaction is CMP-N-acetyl-beta-neuraminate(in) + CMP(out) = CMP-N-acetyl-beta-neuraminate(out) + CMP(in). It catalyses the reaction CMP-N-acetyl-beta-neuraminate(in) + AMP(out) = CMP-N-acetyl-beta-neuraminate(out) + AMP(in). It carries out the reaction CDP-L-ribitol(in) + CDP(out) = CDP-L-ribitol(out) + CDP(in). The enzyme catalyses UMP(out) + CMP-N-acetyl-beta-neuraminate(in) = UMP(in) + CMP-N-acetyl-beta-neuraminate(out). Its function is as follows. Transports CMP-sialic acid from the cytosol into the Golgi apparatus, functioning as an antiporter that exchanges CMP-sialic acid for CMP. Binds both CMP-sialic acid and free CMP, but has higher affinity for free CMP. Also able to exchange CMP-sialic acid for AMP and UMP. Also mediates the transport of CDP-ribitol. The polypeptide is CMP-sialic acid transporter (Homo sapiens (Human)).